The following is a 239-amino-acid chain: Octanoyltransferase (239 aa).

The BPL/LPL catalytic domain maps to E48–T236. Residues R87 to H94, A167 to G169, and G180 to S182 contribute to the substrate site. The Acyl-thioester intermediate role is filled by C198.

This sequence belongs to the LipB family.

The protein resides in the cytoplasm. The enzyme catalyses octanoyl-[ACP] + L-lysyl-[protein] = N(6)-octanoyl-L-lysyl-[protein] + holo-[ACP] + H(+). It participates in protein modification; protein lipoylation via endogenous pathway; protein N(6)-(lipoyl)lysine from octanoyl-[acyl-carrier-protein]: step 1/2. In terms of biological role, catalyzes the transfer of endogenously produced octanoic acid from octanoyl-acyl-carrier-protein onto the lipoyl domains of lipoate-dependent enzymes. Lipoyl-ACP can also act as a substrate although octanoyl-ACP is likely to be the physiological substrate. This chain is Octanoyltransferase, found in Rhizobium etli (strain ATCC 51251 / DSM 11541 / JCM 21823 / NBRC 15573 / CFN 42).